We begin with the raw amino-acid sequence, 85 residues long: Latartoxin-1a (85 aa).

Residues 1–19 (MKVLVFAIVCSVLLQVVLS) form the signal peptide. A propeptide spans 20 to 25 (ADEEAR) (removed in mature form). The short motif at 22–25 (EEAR) is the Processing quadruplet motif element. Disulfide bonds link Cys27/Cys42, Cys34/Cys47, Cys41/Cys64, and Cys49/Cys62.

Belongs to the neurotoxin 19 (CSTX) family. Post-translationally, contains 4 disulfide bonds. Cleavage of the propeptide depends on the processing quadruplet motif (XXXR, with at least one of X being E). As to expression, expressed by the venom gland.

Its subcellular location is the secreted. In terms of biological role, insect toxin. Causes paralysis in larvae of C.vicina by depolarizing membranes at the neuromuscular junction. In Lachesana tarabaevi (Spider), this protein is Latartoxin-1a.